Consider the following 535-residue polypeptide: 2-isopropylmalate synthase (535 aa).

In terms of domain architecture, Pyruvate carboxyltransferase spans 13 to 274 (VLIFDTTLRD…YFNPFLGRPP (262 aa)). 4 residues coordinate Mn(2+): aspartate 22, histidine 213, histidine 215, and asparagine 249. The interval 414–535 (QLEFVQVSCG…LEQRALHPQA (122 aa)) is regulatory domain.

Belongs to the alpha-IPM synthase/homocitrate synthase family. LeuA type 1 subfamily. In terms of assembly, homodimer. Mn(2+) is required as a cofactor.

It localises to the cytoplasm. The catalysed reaction is 3-methyl-2-oxobutanoate + acetyl-CoA + H2O = (2S)-2-isopropylmalate + CoA + H(+). It functions in the pathway amino-acid biosynthesis; L-leucine biosynthesis; L-leucine from 3-methyl-2-oxobutanoate: step 1/4. Functionally, catalyzes the condensation of the acetyl group of acetyl-CoA with 3-methyl-2-oxobutanoate (2-ketoisovalerate) to form 3-carboxy-3-hydroxy-4-methylpentanoate (2-isopropylmalate). The protein is 2-isopropylmalate synthase of Thermosynechococcus vestitus (strain NIES-2133 / IAM M-273 / BP-1).